A 29-amino-acid polypeptide reads, in one-letter code: uncharacterized protein (29 aa).

The disordered stretch occupies residues M1–G29.

This is an uncharacterized protein from Saccharomyces cerevisiae (strain ATCC 204508 / S288c) (Baker's yeast).